The sequence spans 108 residues: Dormancy-associated protein homolog 1 (108 aa).

Positions 28–59 (DIKGVGEGSSSKTVAAVAGSPGTPTTPGSARK) are disordered. Phosphoserine is present on Ser47. The residue at position 50 (Thr50) is a Phosphothreonine.

Belongs to the DRM1/ARP family. Expressed mainly in the low bolt.

In Arabidopsis thaliana (Mouse-ear cress), this protein is Dormancy-associated protein homolog 1.